The following is a 711-amino-acid chain: Polyribonucleotide nucleotidyltransferase (711 aa).

Mg(2+) is bound by residues D486 and D492. Residues P553–I612 enclose the KH domain. Residues G622–K690 enclose the S1 motif domain. The segment at I689–E711 is disordered. Residues E694–E711 are compositionally biased toward low complexity.

The protein belongs to the polyribonucleotide nucleotidyltransferase family. In terms of assembly, component of the RNA degradosome, which is a multiprotein complex involved in RNA processing and mRNA degradation. Requires Mg(2+) as cofactor.

It localises to the cytoplasm. The catalysed reaction is RNA(n+1) + phosphate = RNA(n) + a ribonucleoside 5'-diphosphate. Functionally, involved in mRNA degradation. Catalyzes the phosphorolysis of single-stranded polyribonucleotides processively in the 3'- to 5'-direction. The chain is Polyribonucleotide nucleotidyltransferase from Escherichia fergusonii (strain ATCC 35469 / DSM 13698 / CCUG 18766 / IAM 14443 / JCM 21226 / LMG 7866 / NBRC 102419 / NCTC 12128 / CDC 0568-73).